A 511-amino-acid polypeptide reads, in one-letter code: Bifunctional purine biosynthesis protein PurH (511 aa).

In terms of domain architecture, MGS-like spans 1–147 (MIQIKRALIS…KNYKHTLVLT (147 aa)).

It belongs to the PurH family.

The enzyme catalyses (6R)-10-formyltetrahydrofolate + 5-amino-1-(5-phospho-beta-D-ribosyl)imidazole-4-carboxamide = 5-formamido-1-(5-phospho-D-ribosyl)imidazole-4-carboxamide + (6S)-5,6,7,8-tetrahydrofolate. It carries out the reaction IMP + H2O = 5-formamido-1-(5-phospho-D-ribosyl)imidazole-4-carboxamide. It functions in the pathway purine metabolism; IMP biosynthesis via de novo pathway; 5-formamido-1-(5-phospho-D-ribosyl)imidazole-4-carboxamide from 5-amino-1-(5-phospho-D-ribosyl)imidazole-4-carboxamide (10-formyl THF route): step 1/1. Its pathway is purine metabolism; IMP biosynthesis via de novo pathway; IMP from 5-formamido-1-(5-phospho-D-ribosyl)imidazole-4-carboxamide: step 1/1. The polypeptide is Bifunctional purine biosynthesis protein PurH (Leptospira borgpetersenii serovar Hardjo-bovis (strain JB197)).